The chain runs to 254 residues: Alcohol dehydrogenase (254 aa).

10 to 33 (FVAGLGGIGLDTSREIVKSGPKNL) lines the NAD(+) pocket. Position 138 (serine 138) interacts with substrate. Tyrosine 151 (proton acceptor) is an active-site residue.

It belongs to the short-chain dehydrogenases/reductases (SDR) family. Homodimer.

The enzyme catalyses a primary alcohol + NAD(+) = an aldehyde + NADH + H(+). It carries out the reaction a secondary alcohol + NAD(+) = a ketone + NADH + H(+). The sequence is that of Alcohol dehydrogenase (Adh) from Drosophila differens (Fruit fly).